The chain runs to 392 residues: Protein trapped in endoderm-1 (392 aa).

The Extracellular portion of the chain corresponds to 1–39; the sequence is MDQDMGMATGYFQDADMQMDEPAAATQSIYPHSATLFAA. A helical transmembrane segment spans residues 40 to 60; the sequence is ISACVFVTIGVLGNLITLLAL. The Cytoplasmic segment spans residues 61-73; sequence LKSPTIREHATTA. A helical transmembrane segment spans residues 74–94; that stretch reads FVISLSISDLLFCSFSLPLTA. Over 95-110 the chain is Extracellular; it reads VRFFQESWTFGTTLCK. Residues 111-131 form a helical membrane-spanning segment; that stretch reads IFPVIFYGNVAVSLLSMVGIT. The Cytoplasmic portion of the chain corresponds to 132–156; sequence LNRYILIACHSRYSQIYKPKFITLQ. A helical transmembrane segment spans residues 157 to 177; sequence LLFVWAVSFLLLLPPILGIWG. Over 178 to 202 the chain is Extracellular; sequence EMGLDEATFSCTILKKEGRSIKKTL. The helical transmembrane segment at 203 to 223 threads the bilayer; it reads FVIGFLLPCLVIIVSYSCIYI. Topologically, residues 224-268 are cytoplasmic; the sequence is TVLHQKKKIRNHDNFQIAAAKGSSSSGGGSYMTTTCTRKAREDNR. A helical transmembrane segment spans residues 269-289; sequence LTVMMVTIFLCFLVCFLPLML. Topologically, residues 290-302 are extracellular; sequence ANVVDDERNTSYP. N-linked (GlcNAc...) asparagine glycosylation is present at N298. Residues 303–323 traverse the membrane as a helical segment; it reads WLHIIASVMAWASSVINPIIY. At 324-392 the chain is on the cytoplasmic side; it reads AASNRNYRVA…INQMCQTYSV (69 aa). Residues S359, S362, and S366 each carry the phosphoserine modification. T372 carries the post-translational modification Phosphothreonine.

This sequence belongs to the G-protein coupled receptor 1 family. As to expression, in embryos, expression is seen at highest levels in the cuprophilic cells and at lower levels in the amnioserosa, developing CNS, cardiac mesoderm primordium and midline glia.

It localises to the cell membrane. Functionally, essential for the first active step of germ cell migration: transepithelial migration of germ cells through the posterior midgut (PMG) epithelium. This Drosophila melanogaster (Fruit fly) protein is Protein trapped in endoderm-1 (Tre1).